Here is a 323-residue protein sequence, read N- to C-terminus: uncharacterized protein (323 aa).

Disordered regions lie at residues 185-214 (AELM…GSSW) and 271-294 (GNII…YEKL).

It belongs to the IGBP1/TAP42 family.

This is an uncharacterized protein from Schizosaccharomyces pombe (strain 972 / ATCC 24843) (Fission yeast).